The primary structure comprises 387 residues: Alpha-sarcoglycan (387 aa).

Positions 1 to 23 are cleaved as a signal peptide; the sequence is MAAAVTWIPLLAGLLAGLRDTKA. Over 24–293 the chain is Extracellular; it reads QQTTLHLLVG…RDFLTDALVT (270 aa). 2 N-linked (GlcNAc...) asparagine glycosylation sites follow: N174 and N246. A helical transmembrane segment spans residues 294–314; sequence LLVPLLVALLLTLLLAYIMCF. Over 315–387 the chain is Cytoplasmic; sequence RREGRLKRDM…AQMPLILDQH (73 aa). The residue at position 377 (S377) is a Phosphoserine.

This sequence belongs to the sarcoglycan alpha/epsilon family. As to quaternary structure, cross-link to form 2 major subcomplexes: one consisting of SGCB, SGCD and SGCG and the other consisting of SGCB and SGCD. The association between SGCB and SGCG is particularly strong while SGCA is loosely associated with the other sarcoglycans. Interacts with the syntrophin SNTA1. In terms of tissue distribution, striated muscle, both skeletal and cardiac.

The protein resides in the cell membrane. Its subcellular location is the sarcolemma. It is found in the cytoplasm. It localises to the cytoskeleton. In terms of biological role, component of the sarcoglycan complex, a subcomplex of the dystrophin-glycoprotein complex which forms a link between the F-actin cytoskeleton and the extracellular matrix. In Mus musculus (Mouse), this protein is Alpha-sarcoglycan (Sgca).